Consider the following 128-residue polypeptide: MTRVKRGYIARRRRKKIRFFASSFRGAHSRLTRTIAQQKIRALVSAHRDRDRQKRDFRRLWITRINAAIRERGVYYNYSKFIHDLYKRQLLLNRKILAQIAILNPNCIYMIYNEIIKKEDCKKYLEII.

It belongs to the bacterial ribosomal protein bL20 family. As to quaternary structure, component of the chloroplast large ribosomal subunit (LSU). Mature 70S chloroplast ribosomes of higher plants consist of a small (30S) and a large (50S) subunit. The 30S small subunit contains 1 molecule of ribosomal RNA (16S rRNA) and 24 different proteins. The 50S large subunit contains 3 rRNA molecules (23S, 5S and 4.5S rRNA) and 33 different proteins.

The protein localises to the plastid. Its subcellular location is the chloroplast. Its function is as follows. Component of the chloroplast ribosome (chloro-ribosome), a dedicated translation machinery responsible for the synthesis of chloroplast genome-encoded proteins, including proteins of the transcription and translation machinery and components of the photosynthetic apparatus. This Spinacia oleracea (Spinach) protein is Large ribosomal subunit protein bL20c (rpl20).